A 459-amino-acid chain; its full sequence is MSPQTETKASVGFKAGVKDYKLTYYTPEYETKDTDILAAFRVTPQPGVPPEEAGAAVAAESSTGTWTTVWTDGLTSLDRYKGRCYHIEPVAGEENQYIAYVAYPLDLFEEGSVTNMFTSIVGXVFGFKALRALRLEDLRIPPAYVKTFQGPPHGIQVERDKLNKXGRPLLGCTIKPKLGLSAKNYGRAVYECLRGGLDFTKDDENVNSQPFMRWRDRFLFCAEALFKAQAETGEIKGHYLNATAGTCEEMIKRAVFARELGVPIVMHDYLTGGFTANTSLAHYCRDNGLLLHIHRAMHAVIDRQKNHGIHFRVLAKALRMSGGDHIHAGTVVGKLEGERDITLGFVDLLRDDFIEKDRSRGIYFTQDWVSLPGVLPVASGGIHVWHMPALTEIFGDDSVLQFGGGTIGHPWGNAPGAVAGRVALEACVQARNEGRDLAREGNAIILEASKWSPELAAAC.

Residues 1–2 constitute a propeptide that is removed on maturation; that stretch reads MS. Position 3 is an N-acetylproline (proline 3). Lysine 14 carries the post-translational modification N6,N6,N6-trimethyllysine. Residues residue 123 and threonine 173 each contribute to the substrate site. The active-site Proton acceptor is lysine 175. Lysine 177 contributes to the substrate binding site. Residues lysine 201, aspartate 203, and glutamate 204 each coordinate Mg(2+). Lysine 201 bears the N6-carboxylysine mark. The active-site Proton acceptor is histidine 294. Substrate contacts are provided by arginine 295, histidine 327, and serine 379.

Belongs to the RuBisCO large chain family. Type I subfamily. Heterohexadecamer of 8 large chains and 8 small chains; disulfide-linked. The disulfide link is formed within the large subunit homodimers. Requires Mg(2+) as cofactor. The disulfide bond which can form in the large chain dimeric partners within the hexadecamer appears to be associated with oxidative stress and protein turnover.

The protein resides in the plastid. Its subcellular location is the chloroplast. It catalyses the reaction 2 (2R)-3-phosphoglycerate + 2 H(+) = D-ribulose 1,5-bisphosphate + CO2 + H2O. It carries out the reaction D-ribulose 1,5-bisphosphate + O2 = 2-phosphoglycolate + (2R)-3-phosphoglycerate + 2 H(+). RuBisCO catalyzes two reactions: the carboxylation of D-ribulose 1,5-bisphosphate, the primary event in carbon dioxide fixation, as well as the oxidative fragmentation of the pentose substrate in the photorespiration process. Both reactions occur simultaneously and in competition at the same active site. The chain is Ribulose bisphosphate carboxylase large chain from Corynocarpus laevigatus (New Zealand laurel).